The chain runs to 1174 residues: Male determiner protein Mdmd(II) (1174 aa).

Residues 1-15 show a composition bias toward basic and acidic residues; it reads MNATDAESRKPENKP. 3 disordered regions span residues 1-51, 80-109, and 136-259; these read MNAT…SGQR, KDGS…HPVE, and KQLS…LRRS. Residues 16 to 35 show a composition bias toward low complexity; that stretch reads SSESSSSGSTSGSSDGEVSS. Positions 36–47 are enriched in polar residues; that stretch reads KTYFKNNKSKVL. The span at 80–92 shows a compositional bias: basic and acidic residues; the sequence is KDGSNEMLPKEDS. Residues 93–102 show a composition bias toward polar residues; the sequence is INTNHNYTTD. Low complexity predominate over residues 138–153; the sequence is LSAYRSRSRSTRLSYS. Positions 183-200 are enriched in basic and acidic residues; it reads HGRDSSTTKRSVSRDKDN. A compositionally biased stretch (basic residues) spans 201–223; the sequence is RLRRRIGSSRSHTRSHSRFRRSE. Residues 235–259 show a composition bias toward basic and acidic residues; it reads RSQERRHERRRSMSSDYERIALRRS. One can recognise an MIF4G domain in the interval 348 to 531; that stretch reads KKYIHGYINK…KVLFQVRRDG (184 aa). Residues 597 to 608 show a composition bias toward low complexity; sequence DSDGSFGSGSNS. The tract at residues 597 to 616 is disordered; that stretch reads DSDGSFGSGSNSETALSDCD. The MI domain maps to 641 to 757; sequence ALRRTIYLTL…SWDVLDCIKL (117 aa). The span at 840 to 857 shows a compositional bias: low complexity; sequence SAPSSSSSSSLSSELSAP. 2 disordered regions span residues 840–1045 and 1095–1133; these read SAPS…SRTK and RKDN…NHSR. A compositionally biased stretch (basic residues) spans 869–909; sequence KKKHKGKNKKMTKKKNPSKKKEKTKKIVGKNKIAAKNKTIK. Residues 910 to 924 are compositionally biased toward basic and acidic residues; that stretch reads RRTDKDNSSSKDNFL. Over residues 926–957 the composition is skewed to low complexity; it reads SESSSNESISLDSLSSELFAPSSYSSSESSND. A compositionally biased stretch (basic residues) spans 963 to 1001; that stretch reads KHKGKNKKMTKKKNPSNKREKTKKKLSKNKKAPNKNTKK. The span at 1010 to 1020 shows a compositional bias: low complexity; that stretch reads SSESSISESKS. Residues 1034-1045 show a composition bias toward basic residues; the sequence is RKKRVTSKSRTK. A compositionally biased stretch (basic and acidic residues) spans 1095 to 1118; sequence RKDNYGNRQNHEISQRHDSEIKRR. Positions 1119–1130 are enriched in basic residues; that stretch reads REERKKRHHEKN.

It belongs to the CWC22 family. As to quaternary structure, component of the spliceosome C complex.

The protein resides in the nucleus speckle. Male determiner protein (M-factor) that controls male somatic sexual differentiation. Acts as a dominant factor that regulates the mRNA splicing of transformer (tra) and doublesex (dsx) transcripts and promotes expression of male splice forms of tra and dsx. Probably acts as a component of the spliceosome C complex required for mRNA splicing factor and exon-junction complex (EJC) assembly. Hinders eIF4AIII from non-specifically binding RNA and escorts it to the splicing machinery to promote EJC assembly on mature mRNAs. The protein is Male determiner protein Mdmd(II) of Musca domestica (House fly).